The chain runs to 119 residues: Protein yippee-like 3 (119 aa).

Residues 19–116 (RRYSCVHCRA…IELSHMIKDN (98 aa)) form the Yippee domain. Positions 23, 26, 79, and 82 each coordinate Zn(2+).

Belongs to the yippee family.

The protein localises to the nucleus. The protein resides in the nucleolus. Its function is as follows. May be involved in proliferation and apoptosis in myeloid precursor cells. The sequence is that of Protein yippee-like 3 (ypel3) from Danio rerio (Zebrafish).